A 425-amino-acid polypeptide reads, in one-letter code: Enolase (425 aa).

A (2R)-2-phosphoglycerate-binding site is contributed by Gln162. The active-site Proton donor is Glu204. The Mg(2+) site is built by Asp241, Glu282, and Asp309. The (2R)-2-phosphoglycerate site is built by Lys334, Arg363, Ser364, and Lys385. The active-site Proton acceptor is Lys334.

The protein belongs to the enolase family. Mg(2+) is required as a cofactor.

The protein resides in the cytoplasm. It is found in the secreted. It localises to the cell surface. It carries out the reaction (2R)-2-phosphoglycerate = phosphoenolpyruvate + H2O. The protein operates within carbohydrate degradation; glycolysis; pyruvate from D-glyceraldehyde 3-phosphate: step 4/5. Functionally, catalyzes the reversible conversion of 2-phosphoglycerate (2-PG) into phosphoenolpyruvate (PEP). It is essential for the degradation of carbohydrates via glycolysis. This Micrococcus luteus (strain ATCC 4698 / DSM 20030 / JCM 1464 / CCM 169 / CCUG 5858 / IAM 1056 / NBRC 3333 / NCIMB 9278 / NCTC 2665 / VKM Ac-2230) (Micrococcus lysodeikticus) protein is Enolase.